Here is a 142-residue protein sequence, read N- to C-terminus: MEVCIVKPDRIFFKEEADELLLPTNTGYIGILKDHAPLVTGLDNGVLGVRQGTTWRFLALLGGFGVIKEGRVNILCRDIQDASEINLEEAEQLAATAKESMTKSDSKKGYIENQLKFDRETARVAAAKMYKESAGGSPVFGN.

It belongs to the ATPase epsilon chain family. As to quaternary structure, F-type ATPases have 2 components, CF(1) - the catalytic core - and CF(0) - the membrane proton channel. CF(1) has five subunits: alpha(3), beta(3), gamma(1), delta(1), epsilon(1). CF(0) has three main subunits: a, b and c.

The protein localises to the plastid. It localises to the chloroplast thylakoid membrane. In terms of biological role, produces ATP from ADP in the presence of a proton gradient across the membrane. This chain is ATP synthase epsilon chain, chloroplastic, found in Ostreococcus tauri.